We begin with the raw amino-acid sequence, 95 residues long: MSFKPLHDRIAIKPIEHEEKTKGGIIIPDTAKEKPMQGEIVAVGNGIRNKKGEIHPLELKIGDKVLYGKWAGTEIEIKGEKLIVMKETDVFGIIN.

Belongs to the GroES chaperonin family. Heptamer of 7 subunits arranged in a ring. Interacts with the chaperonin GroEL.

Its subcellular location is the cytoplasm. Its function is as follows. Together with the chaperonin GroEL, plays an essential role in assisting protein folding. The GroEL-GroES system forms a nano-cage that allows encapsulation of the non-native substrate proteins and provides a physical environment optimized to promote and accelerate protein folding. GroES binds to the apical surface of the GroEL ring, thereby capping the opening of the GroEL channel. The polypeptide is Co-chaperonin GroES (Rickettsia felis (strain ATCC VR-1525 / URRWXCal2) (Rickettsia azadi)).